The chain runs to 244 residues: Large ribosomal subunit protein uL30B (244 aa).

The span at 1–11 (MSTEKILTPES) shows a compositional bias: polar residues. Positions 1-21 (MSTEKILTPESQLKKTKAQQK) are disordered.

Belongs to the universal ribosomal protein uL30 family. As to quaternary structure, component of the large ribosomal subunit (LSU). Mature yeast ribosomes consist of a small (40S) and a large (60S) subunit. The 40S small subunit contains 1 molecule of ribosomal RNA (18S rRNA) and 33 different proteins (encoded by 57 genes). The large 60S subunit contains 3 rRNA molecules (25S, 5.8S and 5S rRNA) and 46 different proteins (encoded by 81 genes).

It localises to the cytoplasm. In terms of biological role, component of the ribosome, a large ribonucleoprotein complex responsible for the synthesis of proteins in the cell. The small ribosomal subunit (SSU) binds messenger RNAs (mRNAs) and translates the encoded message by selecting cognate aminoacyl-transfer RNA (tRNA) molecules. The large subunit (LSU) contains the ribosomal catalytic site termed the peptidyl transferase center (PTC), which catalyzes the formation of peptide bonds, thereby polymerizing the amino acids delivered by tRNAs into a polypeptide chain. The nascent polypeptides leave the ribosome through a tunnel in the LSU and interact with protein factors that function in enzymatic processing, targeting, and the membrane insertion of nascent chains at the exit of the ribosomal tunnel. The protein is Large ribosomal subunit protein uL30B of Saccharomyces cerevisiae (strain ATCC 204508 / S288c) (Baker's yeast).